Consider the following 104-residue polypeptide: Thioredoxin (104 aa).

The Thioredoxin domain occupies 2–104 (AIVKVTDSNF…NLAEVLDKHL (103 aa)). A disulfide bridge connects residues Cys-29 and Cys-32.

The protein belongs to the thioredoxin family.

Its function is as follows. Component of the thioredoxin-thioredoxin reductase system. Participates in various redox reactions through the reversible oxidation of its active center dithiol to a disulfide and catalyzes dithiol-disulfide exchange reactions. The sequence is that of Thioredoxin (trxA) from Staphylococcus haemolyticus (strain JCSC1435).